Here is a 212-residue protein sequence, read N- to C-terminus: Nascent polypeptide-associated complex subunit alpha (212 aa).

Disordered stretches follow at residues Met-1–Glu-54 and Gln-123–Asp-177. The segment covering Ala-22–Glu-38 has biased composition (acidic residues). In terms of domain architecture, NAC-A/B spans Ser-51–Ala-116. Residues Glu-128–Lys-157 show a composition bias toward basic and acidic residues. Over residues Lys-158 to Asp-169 the composition is skewed to acidic residues. One can recognise a UBA domain in the interval Leu-173–Ile-212.

This sequence belongs to the NAC-alpha family. As to quaternary structure, part of the nascent polypeptide-associated complex (NAC), consisting of EGD2 and EGD1. NAC associates with ribosomes via EGD1.

It is found in the cytoplasm. Its subcellular location is the nucleus. Functionally, component of the nascent polypeptide-associated complex (NAC), a dynamic component of the ribosomal exit tunnel, protecting the emerging polypeptides from interaction with other cytoplasmic proteins to ensure appropriate nascent protein targeting. The NAC complex also promotes mitochondrial protein import by enhancing productive ribosome interactions with the outer mitochondrial membrane and blocks the inappropriate interaction of ribosomes translating non-secretory nascent polypeptides with translocation sites in the membrane of the endoplasmic reticulum. EGD2 may also be involved in transcription regulation. The protein is Nascent polypeptide-associated complex subunit alpha (egd2) of Botryotinia fuckeliana (strain B05.10) (Noble rot fungus).